Reading from the N-terminus, the 363-residue chain is Teichoic acids export ATP-binding protein TagH (363 aa).

The ABC transporter domain maps to 27–246 (KHFFNIGNVD…YRKFSKDFKA (220 aa)). 60–67 (GINGSGKS) lines the ATP pocket. The interval 247–363 (QTAAYRKKYQ…KSQSVLFNSK (117 aa)) is unknown.

The protein belongs to the ABC transporter superfamily. Teichoic acids exporter (TC 3.A.1.104.1) family. As to quaternary structure, the complex is composed of two ATP-binding proteins (TagH) and two transmembrane proteins (TagG).

It is found in the cell membrane. It carries out the reaction ATP + H2O + teichoic acidSide 1 = ADP + phosphate + teichoic acidSide 2.. Its function is as follows. Part of the ABC transporter complex TagGH involved in teichoic acids export. Responsible for energy coupling to the transport system. This chain is Teichoic acids export ATP-binding protein TagH, found in Lactiplantibacillus plantarum (strain ATCC BAA-793 / NCIMB 8826 / WCFS1) (Lactobacillus plantarum).